The primary structure comprises 200 residues: 3-isopropylmalate dehydratase small subunit (200 aa).

This sequence belongs to the LeuD family. LeuD type 1 subfamily. Heterodimer of LeuC and LeuD.

The catalysed reaction is (2R,3S)-3-isopropylmalate = (2S)-2-isopropylmalate. It participates in amino-acid biosynthesis; L-leucine biosynthesis; L-leucine from 3-methyl-2-oxobutanoate: step 2/4. In terms of biological role, catalyzes the isomerization between 2-isopropylmalate and 3-isopropylmalate, via the formation of 2-isopropylmaleate. This Campylobacter jejuni subsp. jejuni serotype O:6 (strain 81116 / NCTC 11828) protein is 3-isopropylmalate dehydratase small subunit.